We begin with the raw amino-acid sequence, 380 residues long: DNA primase small subunit PriS (380 aa).

Residues aspartate 103, aspartate 105, and aspartate 284 contribute to the active site.

The protein belongs to the eukaryotic-type primase small subunit family. As to quaternary structure, heterodimer of a small subunit (PriS) and a large subunit (PriL). It depends on Mg(2+) as a cofactor. Requires Mn(2+) as cofactor.

Its function is as follows. Catalytic subunit of DNA primase, an RNA polymerase that catalyzes the synthesis of short RNA molecules used as primers for DNA polymerase during DNA replication. The small subunit contains the primase catalytic core and has DNA synthesis activity on its own. Binding to the large subunit stabilizes and modulates the activity, increasing the rate of DNA synthesis while decreasing the length of the DNA fragments, and conferring RNA synthesis capability. The DNA polymerase activity may enable DNA primase to also catalyze primer extension after primer synthesis. May also play a role in DNA repair. This is DNA primase small subunit PriS from Methanocorpusculum labreanum (strain ATCC 43576 / DSM 4855 / Z).